Here is a 21-residue protein sequence, read N- to C-terminus: Cardiotoxin-like basic polypeptide ah (21 aa).

This sequence belongs to the three-finger toxin family. Short-chain subfamily. Orphan group XV sub-subfamily. Contains 4 disulfide bonds. In terms of tissue distribution, expressed by the venom gland.

Its subcellular location is the secreted. It is found in the target cell membrane. In terms of biological role, has hemolytic activity under low-lecithin conditions. Has low cytotoxic activity. Inhibits the expression of VEGF and bFGF in human non-small-cell lung cancer cell line NCI-H1299 in a dose-dependent manner. The protein is Cardiotoxin-like basic polypeptide ah of Naja atra (Chinese cobra).